A 267-amino-acid polypeptide reads, in one-letter code: Protein LicA (267 aa).

The protein belongs to the peptidase S49 family.

Mediates phase variation of the LPS epitopes. Phase variation of H.influenza LPS epitopes expressed by LicA is determined by a translational switch. In Haemophilus influenzae (strain ATCC 51907 / DSM 11121 / KW20 / Rd), this protein is Protein LicA (licA).